The sequence spans 903 residues: Translation initiation factor IF-2 (903 aa).

The tract at residues 49–314 (LNREHGSGPD…GSSLQQGFNK (266 aa)) is disordered. The span at 68–82 (STLNIQGTGGKSKSV) shows a compositional bias: polar residues. Basic and acidic residues-rich tracts occupy residues 93 to 163 (VKRD…EAAE) and 174 to 225 (EVSK…ENAT). Basic residues predominate over residues 265 to 279 (GRARPAKVARQKKSN). Over residues 280-293 (KHSESKADREEARA) the composition is skewed to basic and acidic residues. Residues 402–571 (PRAPVVTIMG…LLQSEVLELK (170 aa)) enclose the tr-type G domain. A G1 region spans residues 411 to 418 (GHVDHGKT). 411–418 (GHVDHGKT) lines the GTP pocket. The tract at residues 436-440 (GITQH) is G2. The segment at 457-460 (DTPG) is G3. Residues 457 to 461 (DTPGH) and 511 to 514 (NKID) contribute to the GTP site. The segment at 511 to 514 (NKID) is G4. The tract at residues 547–549 (SAK) is G5.

It belongs to the TRAFAC class translation factor GTPase superfamily. Classic translation factor GTPase family. IF-2 subfamily.

It is found in the cytoplasm. Functionally, one of the essential components for the initiation of protein synthesis. Protects formylmethionyl-tRNA from spontaneous hydrolysis and promotes its binding to the 30S ribosomal subunits. Also involved in the hydrolysis of GTP during the formation of the 70S ribosomal complex. In Cronobacter sakazakii (strain ATCC BAA-894) (Enterobacter sakazakii), this protein is Translation initiation factor IF-2.